A 264-amino-acid chain; its full sequence is Spermidine/putrescine transport system permease protein PotC (264 aa).

Helical transmembrane passes span 10 to 30 (FMTAIYAYLYIPIIILIVNSF), 66 to 86 (MAVFSATFATLIGSLTAVALY), 109 to 129 (IVMAISLLVLFMLLGIQLGFW), 131 to 151 (LLFSHITFCLPFVVVTVYSRL), 176 to 196 (IILPLAMPAVAAGWVLSFTLS), and 232 to 252 (ALATILLVLSLVMVIASQLIA). The ABC transmembrane type-1 domain maps to 60–248 (AQHSLTMAVF…VLSLVMVIAS (189 aa)).

The protein belongs to the binding-protein-dependent transport system permease family. CysTW subfamily.

The protein resides in the cell inner membrane. Its function is as follows. Required for the activity of the bacterial periplasmic transport system of putrescine and spermidine. The sequence is that of Spermidine/putrescine transport system permease protein PotC (potC) from Shigella flexneri.